A 336-amino-acid chain; its full sequence is Apyrase (336 aa).

Positions 1-21 are cleaved as a signal peptide; that stretch reads MFLKFCVVAFAICLSINLSEG. The N-linked (GlcNAc...) asparagine glycan is linked to Asn209.

It belongs to the apyrase family. Ca(2+) serves as cofactor. As to expression, salivary gland (at protein level).

The protein resides in the secreted. The enzyme catalyses a ribonucleoside 5'-triphosphate + 2 H2O = a ribonucleoside 5'-phosphate + 2 phosphate + 2 H(+). Facilitates hematophagy by inhibiting ADP- and collagen-dependent platelet aggregation in the host. Cleaves adenosine triphosphate (ATP) and adenosine diphosphate (ADP) to adenosine monophosphate (AMP) and inorganic phosphate in calcium-dependent manner. The protein is Apyrase of Phlebotomus duboscqi (Sandfly).